Consider the following 64-residue polypeptide: Large ribosomal subunit protein bL35 (64 aa).

This sequence belongs to the bacterial ribosomal protein bL35 family.

The sequence is that of Large ribosomal subunit protein bL35 from Shewanella putrefaciens (strain CN-32 / ATCC BAA-453).